The following is a 282-amino-acid chain: Protease HtpX homolog (282 aa).

A run of 2 helical transmembrane segments spans residues 7–26 (TTVL…GAVG) and 30–49 (GMMI…YWFS). Histidine 131 is a Zn(2+) binding site. Glutamate 132 is an active-site residue. Histidine 135 is a binding site for Zn(2+). 2 consecutive transmembrane segments (helical) span residues 141-161 (ILVS…ARMA) and 183-203 (LGLV…QLAI). Glutamate 208 lines the Zn(2+) pocket.

It belongs to the peptidase M48B family. Requires Zn(2+) as cofactor.

It localises to the cell inner membrane. The chain is Protease HtpX homolog from Syntrophobacter fumaroxidans (strain DSM 10017 / MPOB).